The following is a 90-amino-acid chain: Lantipeptide prochlorosin 1.7 (90 aa).

A propeptide spanning residues 1–68 is cleaved from the precursor; sequence MSEEQLKAFI…DAELEGVAGG (68 aa). Residues Thr-69 and Thr-73 each carry the 2,3-didehydrobutyrine modification. Positions 76 to 79 form a cross-link, lanthionine (Ser-Cys); sequence SITC. 2 consecutive cross-links (beta-methyllanthionine (Thr-Cys)) follow at residues 78 to 82 and 81 to 90; these read TCETC and TCDLLVGKMC.

In terms of processing, cross-links are proved in vitro, when coepressed in E.coli with the ProcM lanthionine synthetase. Post-translationally, the lanthionine residue has a DL configuration (with 2S,6R stereochemistry), whereas the beta-methyllanthionine residues have a DL configuration (with 2S,3S,6R stereochemistry). Maturation of prochlorosin involves the enzymatic conversion of Thr, and Ser into dehydrated AA and the formation of thioether bonds with cysteines. This is followed by membrane translocation and cleavage of the modified precursor.

It localises to the secreted. Its function is as follows. Lanthionine-containing peptide (lantipeptide) with unknown function. Does not show antibiotic activity against Lactococcus lactis 117 and Bacillus subtilis 6633 bacteria. Organisms that produce this peptide live in oligotrophic environments at very dilute concentrations, suggesting this peptide is not secreted to influence other bacteria. The polypeptide is Lantipeptide prochlorosin 1.7 (Prochlorococcus marinus (strain MIT 9313)).